A 155-amino-acid polypeptide reads, in one-letter code: Pathogenesis-related protein 2 (155 aa).

The protein belongs to the BetVI family.

The protein is Pathogenesis-related protein 2 of Phaseolus vulgaris (Kidney bean).